The following is a 219-amino-acid chain: MTQDEMKKAAGWAALKYVEKDSIVGVGTGSTVNHFIDALATMKADIEGAVSSSEASTQKMKALGIPVYDLNSVDKLSVYVDGADEINGHMDMIKGGGAALTREKIVAAVAEKFVCIVDNTKQVDILGEFPLPVEVIPMARSYVARQLVKLGGDPVYREGVITDNGNVILDVYNLKILNPKELEDKINAIVGVVTNGLFAKRGADVLLVGTPEGVKTFTA.

Substrate contacts are provided by residues Thr28 to Thr31, Asp81 to Asp84, and Lys94 to Gly97. The active-site Proton acceptor is the Glu103. Lys121 provides a ligand contact to substrate.

It belongs to the ribose 5-phosphate isomerase family. As to quaternary structure, homodimer.

It carries out the reaction aldehydo-D-ribose 5-phosphate = D-ribulose 5-phosphate. Its pathway is carbohydrate degradation; pentose phosphate pathway; D-ribose 5-phosphate from D-ribulose 5-phosphate (non-oxidative stage): step 1/1. In terms of biological role, catalyzes the reversible conversion of ribose-5-phosphate to ribulose 5-phosphate. In Shewanella oneidensis (strain ATCC 700550 / JCM 31522 / CIP 106686 / LMG 19005 / NCIMB 14063 / MR-1), this protein is Ribose-5-phosphate isomerase A.